The chain runs to 79 residues: Beta-defensin 130 (79 aa).

Positions 1 to 22 (MKLHSLISVLLLFVTLIPKGKT) are cleaved as a signal peptide. Cystine bridges form between Cys38–Cys53 and Cys43–Cys60.

This sequence belongs to the beta-defensin family.

It is found in the secreted. Its function is as follows. Antimicrobial host-defense peptide. This chain is Beta-defensin 130, found in Pan troglodytes (Chimpanzee).